We begin with the raw amino-acid sequence, 702 residues long: Polyribonucleotide nucleotidyltransferase (702 aa).

2 residues coordinate Mg(2+): Asp-487 and Asp-493. The region spanning 554–613 (PRLLTIKIHPDKIREVIGKGGSTIQAITKETGTQIDIQDDGTIVIASVNAIAAQAAKARI) is the KH domain. The 69-residue stretch at 623–691 (GRIYEGKVAK…KQGRIRLSMK (69 aa)) folds into the S1 motif domain.

It belongs to the polyribonucleotide nucleotidyltransferase family. In terms of assembly, component of the RNA degradosome, which is a multiprotein complex involved in RNA processing and mRNA degradation. Requires Mg(2+) as cofactor.

The protein localises to the cytoplasm. The catalysed reaction is RNA(n+1) + phosphate = RNA(n) + a ribonucleoside 5'-diphosphate. In terms of biological role, involved in mRNA degradation. Catalyzes the phosphorolysis of single-stranded polyribonucleotides processively in the 3'- to 5'-direction. This chain is Polyribonucleotide nucleotidyltransferase, found in Stenotrophomonas maltophilia (strain K279a).